The following is a 278-amino-acid chain: E3 ubiquitin-protein ligase CHIP (278 aa).

TPR repeat units follow at residues A10–V43, A45–S77, and V78–S111. A coiled-coil region spans residues E143–E194. In terms of domain architecture, U-box spans E199–A273.

Interacts with HSC70-4, PP2AA1, PP2AA3 and PP2A5, as well as with UBC8, UBC9 and UBC10. Also interacts with the chloroplastic proteolytic subunits ClpP4, FtsH1 and FtsH2.

It catalyses the reaction S-ubiquitinyl-[E2 ubiquitin-conjugating enzyme]-L-cysteine + [acceptor protein]-L-lysine = [E2 ubiquitin-conjugating enzyme]-L-cysteine + N(6)-ubiquitinyl-[acceptor protein]-L-lysine.. The protein operates within protein modification; protein ubiquitination. In terms of biological role, has E3 ubiquitin-protein ligase activity and may target misfolded substrates towards proteasomal degradation. Regulates the activity of some serine/threonine-protein phosphatases by E3 ubiquitin-protein ligase activity. Required for responses to biotic and abiotic stresses such as auxin, abscisic acid (ABA), low and high temperature and darkness, probably through the activation of serine/threonine-protein phosphatase and the subsequent modification of the plasma membrane composition. Regulates the chloroplastic Clp proteolytic activity in response to stresses. Ubiquitylates FtsH1, a component of the chloroplast FtsH protease, and affects protein degradation in chloroplasts. Mediates plastid precursor degradation to prevent cytosolic precursor accumulation, together with the molecular chaperone HSC70-4. Mediates ubiquitination of transit peptides and thereby led to their degradation through the ubiquitin-proteasome system. This is E3 ubiquitin-protein ligase CHIP from Arabidopsis thaliana (Mouse-ear cress).